The chain runs to 375 residues: POU domain, class 3, transcription factor 1 (375 aa).

Disordered regions lie at residues 1–29, 56–139, and 151–200; these read MAATAQYLPRNNSLPSNPLMHPDSDRMHQ, MSLT…QPLI, and MLGP…PSSD. Composition is skewed to polar residues over residues 107–117, 130–139, and 151–160; these read VHQQTPSSHAW, PGSNSHQPLI, and MLGPQASSLH. Residues 162-171 are compositionally biased toward basic and acidic residues; the sequence is SMRDPLHDDP. A POU-specific domain is found at 194–268; the sequence is EDAPSSDDLE…LLNKWLEETD (75 aa). Residues 286–345 constitute a DNA-binding region (homeobox); sequence KRKKRTSIEVGVKGALENHFLKCPKPSAHEITSLADSLQLEKEVVRVWFCNRRQKEKRMT.

The protein belongs to the POU transcription factor family. Class-3 subfamily.

The protein resides in the nucleus. Its function is as follows. Acts as a transcription factor. May play a role in neuronal differentiation. In Xenopus tropicalis (Western clawed frog), this protein is POU domain, class 3, transcription factor 1.